Consider the following 247-residue polypeptide: Cell division protein ZapD (247 aa).

It belongs to the ZapD family. As to quaternary structure, interacts with FtsZ.

Its subcellular location is the cytoplasm. Functionally, cell division factor that enhances FtsZ-ring assembly. Directly interacts with FtsZ and promotes bundling of FtsZ protofilaments, with a reduction in FtsZ GTPase activity. The sequence is that of Cell division protein ZapD from Escherichia coli O7:K1 (strain IAI39 / ExPEC).